The chain runs to 166 residues: MFPMVPEFMNYGQQTVRAARYIGQGFMITLSHANRLPVTIQYPYEKLITSERFRGRIHFEFDKCIACEVCVRVCPIDLPVVDWKLETDIRKKRLLNYSIDFGICIFCGNCVEYCPTNCLSMTEEYELSTYDRHELNYNQIALGRLPMSIIDDYTIRTILNLPEIKT.

4Fe-4S ferredoxin-type domains lie at 55–84 (GRIHFEFDKCIACEVCVRVCPIDLPVVDWK) and 95–124 (LNYSIDFGICIFCGNCVEYCPTNCLSMTEE). [4Fe-4S] cluster contacts are provided by C64, C67, C70, C74, C104, C107, C110, and C114.

It belongs to the complex I 23 kDa subunit family. As to quaternary structure, NDH is composed of at least 16 different subunits, 5 of which are encoded in the nucleus. Requires [4Fe-4S] cluster as cofactor.

Its subcellular location is the plastid. The protein localises to the chloroplast thylakoid membrane. It catalyses the reaction a plastoquinone + NADH + (n+1) H(+)(in) = a plastoquinol + NAD(+) + n H(+)(out). The enzyme catalyses a plastoquinone + NADPH + (n+1) H(+)(in) = a plastoquinol + NADP(+) + n H(+)(out). Its function is as follows. NDH shuttles electrons from NAD(P)H:plastoquinone, via FMN and iron-sulfur (Fe-S) centers, to quinones in the photosynthetic chain and possibly in a chloroplast respiratory chain. The immediate electron acceptor for the enzyme in this species is believed to be plastoquinone. Couples the redox reaction to proton translocation, and thus conserves the redox energy in a proton gradient. The polypeptide is NAD(P)H-quinone oxidoreductase subunit I, chloroplastic (Oblivia mikanioides (Salmea mikanioides)).